A 1046-amino-acid polypeptide reads, in one-letter code: UDP-N-acetylglucosamine--peptide N-acetylglucosaminyltransferase 110 kDa subunit (1046 aa).

The residue at position 2 (A2) is an N-acetylalanine. Phosphoserine; by GSK3-beta; alternate is present on residues S3 and S4. S3 and S4 each carry an O-linked (GlcNAc) serine; alternate glycan. An O-linked (GlcNAc) serine glycan is attached at D10. T12 carries an O-linked (GlcNAc) threonine glycan. An O-linked (GlcNAc) serine glycan is attached at M18. At S20 the chain carries Phosphoserine. Residues 21–54 (FQGLAELAHREYQAGDFEAAERHCMQLWRQEPDN) form a TPR 1 repeat. O-linked (GlcNAc) threonine glycosylation is present at E38. Residues P52 and G56 are each glycosylated (O-linked (GlcNAc) serine). TPR repeat units lie at residues 89 to 122 (AEAY…KPDF), 123 to 156 (IDGY…NPDL), 157 to 190 (YCVR…QPNF), 191 to 224 (AVAW…DPNF), 225 to 258 (LDAY…SPNH), 259 to 292 (AVVH…QPHF), 293 to 326 (PDAY…CPTH), 327 to 360 (ADSL…FPEF), 361 to 394 (AAAH…SPTF), 395 to 428 (ADAY…NPAF), and 429 to 462 (ADAH…KPDF). O-linked (GlcNAc) serine; by autocatalysis glycosylation is present at S399. Phosphothreonine; by AMPK is present on T454. A TPR 13; truncated repeat occupies 463–473 (PDAYCNLAHCL). The short motif at 464–466 (DAY) is the DFP motif element. The Nuclear localization signal motif lies at 487 to 503 (KKLVSIVADQLEKNRLP). The active-site Proton acceptor is the H508. Residues Q849, K852, 906 to 908 (APK), 911 to 914 (HVRR), 930 to 932 (HTT), and D935 contribute to the UDP site. Y989 carries the phosphotyrosine modification. Positions 991–1010 (KKVRGKVWKQRISSPLFNTK) are required for phosphatidylinositol 3,4,5-triphosphate binding.

The protein belongs to the glycosyltransferase 41 family. O-GlcNAc transferase subfamily. As to quaternary structure, monomer; may exist in different oligomerization states in cells. Homotrimer, oligomerizes via TPR repeats 6 and 7. Trimerization is not necessary for activity in vitro, however it increases affinity for UDP-GlcNAc. Component of a THAP1/THAP3-HCFC1-OGT complex. Component of the NSL complex at least composed of MOF/KAT8, KANSL1, KANSL2, KANSL3, MCRS1, PHF20, OGT1/OGT, WDR5 and HCFC1. Found in a complex with KIF5B, RHOT1, RHOT2 and TRAK1. Found in a complex composed of at least SINHCAF, SIN3A, HDAC1, SAP30, RBBP4, OGT and TET1. Component of a complex composed of KMT2E/MLL5 (isoform 3), OGT (isoform 1) and USP7; the complex stabilizes KMT2E/MLL5, preventing KMT2E/MLL5 ubiquitination and proteasomal-mediated degradation. Interacts (via TPRs 1-6) with SIN3A; the interaction mediates transcriptional repression in parallel with histone deacetylase. Interacts (via TPR 5-6) with TET1, TET2 and TET3. Interacts (via TPR repeats 6 and 7) with ATXN10. Interacts with NSD2. Interacts with PROSER1; this interaction mediates TET2 O-GlcNAcylation and stability by promoting the interaction between OGT and TET2. Interacts with USP7. In terms of assembly, (Microbial infection) Interacts with human T-cell leukemia virus 1/HTLV-1 protein Tax; this interaction increases Tax interacting partner CREB1 O-GlcNAcylation. Ubiquitinated by the SCF(FBXO31) complex, leading to its proteasomal degradation. In terms of processing, phosphorylation on Ser-3 or Ser-4 by GSK3-beta positively regulates its activity. Phosphorylation at Thr-454 by AMPK promotes nuclear localization. Post-translationally, glycosylated via autocatalysis; O-GlcNAcylation at Ser-399 promotes nuclear localization. Glycosylated via autocatalysis; does not affect the enzyme activity but regulates substrate selectivity. In terms of tissue distribution, highly expressed in pancreas and to a lesser extent in skeletal muscle, heart, brain and placenta. Present in trace amounts in lung and liver.

It is found in the nucleus. It localises to the cytoplasm. The protein resides in the mitochondrion. Its subcellular location is the membrane. The protein localises to the cell membrane. It is found in the mitochondrion membrane. It localises to the cell projection. It carries out the reaction L-seryl-[protein] + UDP-N-acetyl-alpha-D-glucosamine = 3-O-(N-acetyl-beta-D-glucosaminyl)-L-seryl-[protein] + UDP + H(+). It catalyses the reaction L-threonyl-[protein] + UDP-N-acetyl-alpha-D-glucosamine = 3-O-(N-acetyl-beta-D-glucosaminyl)-L-threonyl-[protein] + UDP + H(+). Its pathway is protein modification; protein glycosylation. With respect to regulation, subject to product inhibition by UDP. Its function is as follows. Catalyzes the transfer of a single N-acetylglucosamine from UDP-GlcNAc to a serine or threonine residue in cytoplasmic and nuclear proteins resulting in their modification with a beta-linked N-acetylglucosamine (O-GlcNAc). Glycosylates a large and diverse number of proteins including histone H2B, AKT1, AMPK, ATG4B, CAPRIN1, EZH2, FNIP1, GSDMD, KRT7, LMNA, LMNB1, LMNB2, RPTOR, HOXA1, PFKL, KMT2E/MLL5, MAPT/TAU, TET2, RBL2, RET, NOD2 and HCFC1. Can regulate their cellular processes via cross-talk between glycosylation and phosphorylation or by affecting proteolytic processing. Involved in insulin resistance in muscle and adipocyte cells via glycosylating insulin signaling components and inhibiting the 'Thr-308' phosphorylation of AKT1, enhancing IRS1 phosphorylation and attenuating insulin signaling. Involved in glycolysis regulation by mediating glycosylation of 6-phosphofructokinase PFKL, inhibiting its activity. Plays a key role in chromatin structure by mediating O-GlcNAcylation of 'Ser-112' of histone H2B: recruited to CpG-rich transcription start sites of active genes via its interaction with TET proteins (TET1, TET2 or TET3). As part of the NSL complex indirectly involved in acetylation of nucleosomal histone H4 on several lysine residues. O-GlcNAcylation of 'Ser-75' of EZH2 increases its stability, and facilitating the formation of H3K27me3 by the PRC2/EED-EZH2 complex. Stabilizes KMT2E/MLL5 by mediating its glycosylation, thereby preventing KMT2E/MLL5 ubiquitination. Regulates circadian oscillation of the clock genes and glucose homeostasis in the liver. Stabilizes clock proteins BMAL1 and CLOCK through O-glycosylation, which prevents their ubiquitination and subsequent degradation. Promotes the CLOCK-BMAL1-mediated transcription of genes in the negative loop of the circadian clock such as PER1/2 and CRY1/2. O-glycosylates HCFC1 and regulates its proteolytic processing and transcriptional activity. Component of a THAP1/THAP3-HCFC1-OGT complex that is required for the regulation of the transcriptional activity of RRM1. Regulates mitochondrial motility in neurons by mediating glycosylation of TRAK1. Promotes autophagy by mediating O-glycosylation of ATG4B. Acts as a regulator of mTORC1 signaling by mediating O-glycosylation of RPTOR and FNIP1: O-GlcNAcylation of RPTOR in response to glucose sufficiency promotes activation of the mTORC1 complex. The mitochondrial isoform (mOGT) is cytotoxic and triggers apoptosis in several cell types including INS1, an insulinoma cell line. In terms of biological role, has N-acetylglucosaminyltransferase activity: glycosylates proteins, such as HNRNPU, NEUROD1, NUP62 and PDCD6IP. Displays specific substrate selectivity compared to other isoforms. The sequence is that of UDP-N-acetylglucosamine--peptide N-acetylglucosaminyltransferase 110 kDa subunit from Homo sapiens (Human).